The following is a 367-amino-acid chain: 4-hydroxy-3-methylbut-2-en-1-yl diphosphate synthase (flavodoxin) (367 aa).

[4Fe-4S] cluster contacts are provided by Cys268, Cys271, Cys303, and Glu310.

It belongs to the IspG family. The cofactor is [4Fe-4S] cluster.

It carries out the reaction (2E)-4-hydroxy-3-methylbut-2-enyl diphosphate + oxidized [flavodoxin] + H2O + 2 H(+) = 2-C-methyl-D-erythritol 2,4-cyclic diphosphate + reduced [flavodoxin]. Its pathway is isoprenoid biosynthesis; isopentenyl diphosphate biosynthesis via DXP pathway; isopentenyl diphosphate from 1-deoxy-D-xylulose 5-phosphate: step 5/6. Converts 2C-methyl-D-erythritol 2,4-cyclodiphosphate (ME-2,4cPP) into 1-hydroxy-2-methyl-2-(E)-butenyl 4-diphosphate. The chain is 4-hydroxy-3-methylbut-2-en-1-yl diphosphate synthase (flavodoxin) from Halalkalibacterium halodurans (strain ATCC BAA-125 / DSM 18197 / FERM 7344 / JCM 9153 / C-125) (Bacillus halodurans).